The sequence spans 251 residues: Hydroxyacylglutathione hydrolase (251 aa).

Zn(2+) contacts are provided by H53, H55, D57, H58, H110, D127, and H165.

The protein belongs to the metallo-beta-lactamase superfamily. Glyoxalase II family. In terms of assembly, monomer. The cofactor is Zn(2+).

The catalysed reaction is an S-(2-hydroxyacyl)glutathione + H2O = a 2-hydroxy carboxylate + glutathione + H(+). Its pathway is secondary metabolite metabolism; methylglyoxal degradation; (R)-lactate from methylglyoxal: step 2/2. Functionally, thiolesterase that catalyzes the hydrolysis of S-D-lactoyl-glutathione to form glutathione and D-lactic acid. This chain is Hydroxyacylglutathione hydrolase, found in Escherichia coli O45:K1 (strain S88 / ExPEC).